The following is a 252-amino-acid chain: Tabtoxin biosynthesis enzyme (252 aa).

The disordered stretch occupies residues 1–23; that stretch reads MYQRTATQLARKPASKQGETEMN.

Its function is as follows. May play a role in tabtoxin biosynthesis. The chain is Tabtoxin biosynthesis enzyme (tblA) from Pseudomonas amygdali pv. tabaci (Pseudomonas syringae pv. tabaci).